An 89-amino-acid chain; its full sequence is Protein S100-A8 (89 aa).

Ala2 is subject to N-acetylalanine. 2 EF-hand domains span residues 13–48 (IEVY…FVQN) and 46–81 (VQNK…VGVA). Zn(2+) contacts are provided by His17 and His27. Asp33 provides a ligand contact to Ca(2+). The residue at position 42 (Cys42) is an S-nitrosocysteine. 4 residues coordinate Ca(2+): Asp59, Asn61, Asp63, and Glu70. His83 contacts Zn(2+).

The protein belongs to the S-100 family. As to quaternary structure, homodimer. Preferentially exists as a heterodimer or heterotetramer with S100A9 known as calprotectin (S100A8/A9). S100A8 interacts with AGER, ATP2A2 and with the heterodimeric complex formed by TLR4 and LY96. Calprotectin (S100A8/9) interacts with CEACAM3 and tubulin filaments in a calcium-dependent manner. Heterotetrameric calprotectin (S100A8/A9) interacts with ANXA6 and associates with tubulin filaments in activated monocytes. S100A8 and calprotectin (S100A8/9) interact with NCF2/P67PHOX, RAC1 and RAC2. Calprotectin (S100A8/9) interacts with CYBA and CYBB. Calprotectin (S100A8/9) interacts with NOS2 to form the iNOS-S100A8/A9 transnitrosylase complex. Calprotectin (S100A8/9) interacts with CD69.

It localises to the secreted. Its subcellular location is the cytoplasm. The protein localises to the cytoskeleton. The protein resides in the cell membrane. Functionally, S100A8 is a calcium- and zinc-binding protein which plays a prominent role in the regulation of inflammatory processes and immune response. It can induce neutrophil chemotaxis and adhesion. Predominantly found as calprotectin (S100A8/A9) which has a wide plethora of intra- and extracellular functions. The intracellular functions include: facilitating leukocyte arachidonic acid trafficking and metabolism, modulation of the tubulin-dependent cytoskeleton during migration of phagocytes and activation of the neutrophilic NADPH-oxidase. Also participates in regulatory T-cell differentiation together with CD69. Activates NADPH-oxidase by facilitating the enzyme complex assembly at the cell membrane, transferring arachidonic acid, an essential cofactor, to the enzyme complex and S100A8 contributes to the enzyme assembly by directly binding to NCF2/P67PHOX. The extracellular functions involve pro-inflammatory, antimicrobial, oxidant-scavenging and apoptosis-inducing activities. Its pro-inflammatory activity includes recruitment of leukocytes, promotion of cytokine and chemokine production, and regulation of leukocyte adhesion and migration. Acts as an alarmin or a danger associated molecular pattern (DAMP) molecule and stimulates innate immune cells via binding to pattern recognition receptors such as Toll-like receptor 4 (TLR4) and receptor for advanced glycation endproducts (AGER). Binding to TLR4 and AGER activates the MAP-kinase and NF-kappa-B signaling pathways resulting in the amplification of the pro-inflammatory cascade. Has antimicrobial activity towards bacteria and fungi and exerts its antimicrobial activity probably via chelation of Zn(2+) which is essential for microbial growth. Can induce cell death via autophagy and apoptosis and this occurs through the cross-talk of mitochondria and lysosomes via reactive oxygen species (ROS) and the process involves BNIP3. Can regulate neutrophil number and apoptosis by an anti-apoptotic effect; regulates cell survival via ITGAM/ITGB and TLR4 and a signaling mechanism involving MEK-ERK. Its role as an oxidant scavenger has a protective role in preventing exaggerated tissue damage by scavenging oxidants. The iNOS-S100A8/A9 transnitrosylase complex is proposed to direct selective inflammatory stimulus-dependent S-nitrosylation of multiple targets such as GAPDH, ANXA5, EZR, MSN and VIM by recognizing a [IL]-x-C-x-x-[DE] motif; S100A8 seems to contribute to S-nitrosylation site selectivity. In Rattus norvegicus (Rat), this protein is Protein S100-A8 (S100a8).